Reading from the N-terminus, the 492-residue chain is Histone-lysine N-methyltransferase SUVR4 (492 aa).

Residues 112 to 138 (ETRSASSGSSIQVVQKQPQLSNGDRKR) form a disordered region. Residues 113–133 (TRSASSGSSIQVVQKQPQLSN) show a composition bias toward polar residues. Positions 196, 197, 200, 204, 213, 281, 285, 287, and 291 each coordinate Zn(2+). A Pre-SET domain is found at 196–299 (CCANCKGNCL…QCGNRVVQRG (104 aa)). The region spanning 302-435 (CQLQVYFTQE…AMDELTWDYM (134 aa)) is the SET domain. S-adenosyl-L-methionine-binding positions include 313–315 (KGW) and 391–392 (NH). Cys394 provides a ligand contact to Zn(2+). Tyr434 contributes to the S-adenosyl-L-methionine binding site. A Post-SET domain is found at 446 to 462 (KAFRCCCGSESCRDRKI). Cys450, Cys452, and Cys457 together coordinate Zn(2+). The interval 463-492 (KGSQGKSIERRKIVSAKKQQGSKEVSKKRK) is disordered.

This sequence belongs to the class V-like SAM-binding methyltransferase superfamily. Histone-lysine methyltransferase family. As to quaternary structure, interacts with ubiquitin.

The protein resides in the nucleus. Its subcellular location is the chromosome. It carries out the reaction N(6)-methyl-L-lysyl(9)-[histone H3] + S-adenosyl-L-methionine = N(6),N(6)-dimethyl-L-lysyl(9)-[histone H3] + S-adenosyl-L-homocysteine + H(+). It catalyses the reaction N(6),N(6)-dimethyl-L-lysyl(9)-[histone H3] + S-adenosyl-L-methionine = N(6),N(6),N(6)-trimethyl-L-lysyl(9)-[histone H3] + S-adenosyl-L-homocysteine + H(+). Functionally, histone methyltransferase that converts monomethylated 'Lys-9' of histone H3 (H3K9me1) to dimethylated 'Lys-9' (H3K9me2) in the absence of bound ubiquitin, and to trimethylated 'Lys-9' (H3K9me3) in the presence of bound ubiquitin. Acts in a locus-specific manner and contributes to the transcriptional silencing of pseudogenes and transposons. H3 'Lys-9' methylation represents a specific tag for epigenetic transcriptional repression. The polypeptide is Histone-lysine N-methyltransferase SUVR4 (SUVR4) (Arabidopsis thaliana (Mouse-ear cress)).